A 516-amino-acid polypeptide reads, in one-letter code: MTDIHNHKILILDFGSQYTQLIARRVREVGVFCEIFPHDVAADFIKNYQAKGIILSGGPESVYDSDVKAPEIVFKLGIPVLGICYGMQTMVMQHGGEVKGADQSEFGKAIINILNSTNNIFSNMEHEQLVWMSHSDKVTQTGEHFEIIASSTNAPVAAVAHKSKPFFGVQFHPETTHTENGKQIIENFVVNICGCDTLWNIENIIENDIKEIKQKVGTDKVILGLSGGVDSSVVAAILHQAIGDQLTCIFVDTGLLRLNEGNQVMQVFAEHMDINVIRINAKNRFLDALRGICDPEQKRKIIGKLFVDIFDEEAAKIENAKWLAQGTIYSDVIESAGNNQSKAHVIKSHHNVGGLPKEMKLKLLEPLRELFKDEVRKLGLGLGLPYNMLYRHPFPGPGLGVRILGEIKKEYVETLQKADAIFTEELYKHNLYHDVSQAFGVFLPVKSVGVVGDQRRYEYVIALRAVVSIDFMTATWANLPYDFLSLVSNRIVNEVKQVSRVVYDVTGKPPGTIEWE.

The region spanning 8-198 (KILILDFGSQ…VVNICGCDTL (191 aa)) is the Glutamine amidotransferase type-1 domain. Cys84 functions as the Nucleophile in the catalytic mechanism. Residues His172 and Glu174 contribute to the active site. The 193-residue stretch at 199-391 (WNIENIIEND…LGLPYNMLYR (193 aa)) folds into the GMPS ATP-PPase domain. 226–232 (SGGVDSS) provides a ligand contact to ATP.

Homodimer.

The enzyme catalyses XMP + L-glutamine + ATP + H2O = GMP + L-glutamate + AMP + diphosphate + 2 H(+). The protein operates within purine metabolism; GMP biosynthesis; GMP from XMP (L-Gln route): step 1/1. In terms of biological role, catalyzes the synthesis of GMP from XMP. This chain is GMP synthase [glutamine-hydrolyzing], found in Francisella tularensis subsp. novicida (strain U112).